The primary structure comprises 380 residues: F-box/kelch-repeat protein At3g18720 (380 aa).

Residues 47–94 (LWDKQIPTDLLQEILSRLGLKANIHASLVCKTWLKEAVSVRKFQSRPW) form the F-box domain. 2 Kelch repeats span residues 190–233 (CVIS…INRC) and 234–279 (IFSN…LVRQ).

This is F-box/kelch-repeat protein At3g18720 from Arabidopsis thaliana (Mouse-ear cress).